Consider the following 217-residue polypeptide: Transmembrane emp24 domain-containing protein p24delta6 (217 aa).

The signal sequence occupies residues 1–26 (MAISPVLFIGLIYLAGGGSLFPGVEA). The Lumenal portion of the chain corresponds to 27-186 (IWLTVPESGE…INEKTNTRVN (160 aa)). The GOLD domain occupies 36 to 152 (ERCVYEEIQA…IEGVELEIRR (117 aa)). 2 N-linked (GlcNAc...) asparagine glycosylation sites follow: N84 and N116. The stretch at 138 to 160 (AKKEKIEGVELEIRRSTEYASAI) forms a coiled coil. Residues R170 and R175 each carry the omega-N-methylated arginine modification. A helical transmembrane segment spans residues 187–207 (QLGLMSLGVAIVVSISQVLYL). The Cytoplasmic portion of the chain corresponds to 208-217 (KRYFLKKKLI). The COPII vesicle coat-binding motif lies at 210-211 (YF). The COPI vesicle coat-binding motif lies at 210–217 (YFLKKKLI).

It belongs to the EMP24/GP25L family. In terms of assembly, probably oligomerizes with other members of the EMP24/GP25L family. Associates with the COPI vesicle coat (coatomer). Associates with the COPII vesicle coat (coatomer).

The protein resides in the endoplasmic reticulum membrane. In terms of biological role, involved in vesicular protein trafficking. Mainly functions in the early secretory pathway. Thought to act as cargo receptor at the lumenal side for incorporation of secretory cargo molecules into transport vesicles and to be involved in vesicle coat formation at the cytoplasmic side. The polypeptide is Transmembrane emp24 domain-containing protein p24delta6 (Arabidopsis thaliana (Mouse-ear cress)).